Here is a 139-residue protein sequence, read N- to C-terminus: Low molecular weight protein-tyrosine-phosphatase PtpB (139 aa).

Cysteine 7 (nucleophile) is an active-site residue. The active site involves arginine 13. The active-site Proton donor is aspartate 111.

It belongs to the low molecular weight phosphotyrosine protein phosphatase family.

It carries out the reaction O-phospho-L-tyrosyl-[protein] + H2O = L-tyrosyl-[protein] + phosphate. With respect to regulation, inhibited by N-ethylmaleimide and sodium orthovanadate. Dephosphorylates the phosphotyrosine-containing proteins. The polypeptide is Low molecular weight protein-tyrosine-phosphatase PtpB (ptpB) (Staphylococcus aureus).